We begin with the raw amino-acid sequence, 160 residues long: Cytosolic iron-sulfur assembly component 2A (160 aa).

The Zn(2+) site is built by H89, H123, E150, and E153.

It belongs to the MIP18 family. In terms of assembly, monomer and homodimer. Component of the CIA complex. Interacts with CIAO1. Interacts with IREB2. Interacts with APAF1. As to expression, substantially enriched in macrophages.

Its subcellular location is the cytoplasm. Its function is as follows. Component of the cytosolic iron-sulfur protein assembly (CIA) complex, a multiprotein complex that mediates the incorporation of iron-sulfur cluster into extramitochondrial Fe/S proteins. As a CIA complex component and in collaboration with CIAO1 specifically matures ACO1 and stabilizes IREB2, connecting cytosolic iron-sulfur protein maturation with cellular iron regulation. May play a role in chromosome segregation through establishment of sister chromatid cohesion. May induce apoptosis in collaboration with APAF1. The chain is Cytosolic iron-sulfur assembly component 2A from Homo sapiens (Human).